A 330-amino-acid polypeptide reads, in one-letter code: Poly(3-hydroxyalkanoate) polymerase subunit PhaE (330 aa).

Residues R298–N328 adopt a coiled-coil conformation.

Belongs to the PHA/PHB synthase family. Type III PhaE subfamily. As to quaternary structure, forms a heterodimer with PhaC, which may multimerize in the presence of 3-hydroxybutyryl-CoA. Both subunits are required for PHB synthesis in E.coli and in PHA-negative A.eutrophus.

It localises to the cytoplasm. It participates in biopolymer metabolism; poly-(R)-3-hydroxybutanoate biosynthesis. Its function is as follows. When expressed in E.coli with Synechocystis PhaC and C.necator PhaA and PhaB, confers the ability to synthesize up to 13% (w/w) poly(3-hydroxybutyrate) (PHB) depending on the carbon source; all 4 genes are necessary for PHB production. Cell-free in vitro coexpression with PhaE gives a heterodimer able to polymerize 3-hydroxybutyrate-CoA. This subunit has no catalytic activity but enhances the activity of PhaC, the catalytic subunit. This Synechocystis sp. (strain ATCC 27184 / PCC 6803 / Kazusa) protein is Poly(3-hydroxyalkanoate) polymerase subunit PhaE.